The following is a 158-amino-acid chain: MFRIGQGFDVHQLVEGRPLIIGGVTIPYEKGLLGHSDADVLLHAVADACLGAIGAGDIGRHFPDTDPRFKDADSAELLAHVWALARQEGYRLVNADCTIIAQKPKLAPYIEEMRAVIARLLEAERSQVNVKATTTEKLGFTGRGEGIAAQAVVLLQKS.

Residues aspartate 9 and histidine 11 each coordinate a divalent metal cation. Residues 9–11 and 35–36 each bind 4-CDP-2-C-methyl-D-erythritol 2-phosphate; these read DVH and HS. Histidine 43 is a binding site for a divalent metal cation. Residues 57 to 59, 62 to 66, 133 to 136, phenylalanine 140, and arginine 143 contribute to the 4-CDP-2-C-methyl-D-erythritol 2-phosphate site; these read DIG, FPDTD, and TTTE.

This sequence belongs to the IspF family. Homotrimer. Requires a divalent metal cation as cofactor.

The enzyme catalyses 4-CDP-2-C-methyl-D-erythritol 2-phosphate = 2-C-methyl-D-erythritol 2,4-cyclic diphosphate + CMP. The protein operates within isoprenoid biosynthesis; isopentenyl diphosphate biosynthesis via DXP pathway; isopentenyl diphosphate from 1-deoxy-D-xylulose 5-phosphate: step 4/6. Its function is as follows. Involved in the biosynthesis of isopentenyl diphosphate (IPP) and dimethylallyl diphosphate (DMAPP), two major building blocks of isoprenoid compounds. Catalyzes the conversion of 4-diphosphocytidyl-2-C-methyl-D-erythritol 2-phosphate (CDP-ME2P) to 2-C-methyl-D-erythritol 2,4-cyclodiphosphate (ME-CPP) with a corresponding release of cytidine 5-monophosphate (CMP). The sequence is that of 2-C-methyl-D-erythritol 2,4-cyclodiphosphate synthase from Geobacillus kaustophilus (strain HTA426).